The primary structure comprises 445 residues: UPF0210 protein SUB1511 (445 aa).

The protein belongs to the UPF0210 family. In terms of assembly, homodimer.

In Streptococcus uberis (strain ATCC BAA-854 / 0140J), this protein is UPF0210 protein SUB1511.